The sequence spans 256 residues: Pyridoxine 5'-phosphate synthase (256 aa).

Residue N12 participates in 3-amino-2-oxopropyl phosphate binding. 1-deoxy-D-xylulose 5-phosphate is bound at residue 14–15; the sequence is DH. R23 serves as a coordination point for 3-amino-2-oxopropyl phosphate. Residue H48 is the Proton acceptor of the active site. 1-deoxy-D-xylulose 5-phosphate is bound by residues R50 and H55. E75 acts as the Proton acceptor in catalysis. 1-deoxy-D-xylulose 5-phosphate is bound at residue T105. H199 acts as the Proton donor in catalysis. 3-amino-2-oxopropyl phosphate is bound by residues G200 and 221-222; that span reads GY.

Belongs to the PNP synthase family. Homooctamer; tetramer of dimers.

It is found in the cytoplasm. The catalysed reaction is 3-amino-2-oxopropyl phosphate + 1-deoxy-D-xylulose 5-phosphate = pyridoxine 5'-phosphate + phosphate + 2 H2O + H(+). It participates in cofactor biosynthesis; pyridoxine 5'-phosphate biosynthesis; pyridoxine 5'-phosphate from D-erythrose 4-phosphate: step 5/5. In terms of biological role, catalyzes the complicated ring closure reaction between the two acyclic compounds 1-deoxy-D-xylulose-5-phosphate (DXP) and 3-amino-2-oxopropyl phosphate (1-amino-acetone-3-phosphate or AAP) to form pyridoxine 5'-phosphate (PNP) and inorganic phosphate. This Bradyrhizobium sp. (strain ORS 278) protein is Pyridoxine 5'-phosphate synthase.